The following is a 346-amino-acid chain: Phosphate acyltransferase (346 aa).

The protein belongs to the PlsX family. In terms of assembly, homodimer. Probably interacts with PlsY.

It localises to the cytoplasm. It carries out the reaction a fatty acyl-[ACP] + phosphate = an acyl phosphate + holo-[ACP]. The protein operates within lipid metabolism; phospholipid metabolism. Catalyzes the reversible formation of acyl-phosphate (acyl-PO(4)) from acyl-[acyl-carrier-protein] (acyl-ACP). This enzyme utilizes acyl-ACP as fatty acyl donor, but not acyl-CoA. The polypeptide is Phosphate acyltransferase (Geobacter sulfurreducens (strain ATCC 51573 / DSM 12127 / PCA)).